We begin with the raw amino-acid sequence, 105 residues long: Urease subunit beta (105 aa).

The protein belongs to the urease beta subunit family. As to quaternary structure, heterotrimer of UreA (gamma), UreB (beta) and UreC (alpha) subunits. Three heterotrimers associate to form the active enzyme.

Its subcellular location is the cytoplasm. It carries out the reaction urea + 2 H2O + H(+) = hydrogencarbonate + 2 NH4(+). The protein operates within nitrogen metabolism; urea degradation; CO(2) and NH(3) from urea (urease route): step 1/1. The sequence is that of Urease subunit beta from Mycobacterium sp. (strain JLS).